A 121-amino-acid polypeptide reads, in one-letter code: Outer membrane lipoprotein BBA14 (121 aa).

Residues 1-19 (MQIKNFPFLFLLNSLIIFS) form the signal peptide. The N-palmitoyl cysteine moiety is linked to residue C20. C20 carries S-diacylglycerol cysteine lipidation.

The protein localises to the cell outer membrane. Outer membrane lipoprotein that could act as a component of a potential toxin-antitoxin system in B.burgdorferi which could serve as a plasmid stabilization mechanism in a growing bacterial population. The polypeptide is Outer membrane lipoprotein BBA14 (Borreliella burgdorferi (strain ATCC 35210 / DSM 4680 / CIP 102532 / B31) (Borrelia burgdorferi)).